A 608-amino-acid polypeptide reads, in one-letter code: Afamin (608 aa).

An N-terminal signal peptide occupies residues 1–21 (MRHLKLTGFIFFLLPLTESLA). Albumin domains are found at residues 22-210 (LPTK…APIT), 211-403 (QYLK…KFNE), and 404-599 (TTQR…KTGD). The N-linked (GlcNAc...) asparagine glycan is linked to asparagine 33. 11 disulfides stabilise this stretch: cysteine 77–cysteine 86, cysteine 99–cysteine 114, cysteine 113–cysteine 124, cysteine 148–cysteine 193, cysteine 192–cysteine 201, cysteine 224–cysteine 270, cysteine 269–cysteine 277, cysteine 289–cysteine 303, cysteine 302–cysteine 313, cysteine 340–cysteine 385, and cysteine 384–cysteine 393. N-linked (GlcNAc...) asparagine glycosylation is present at asparagine 109. A glycan (N-linked (GlcNAc...) asparagine) is linked at asparagine 153. Residues 215–319 (ASSSYQRNVC…REACIINANK (105 aa)) form a binding pocket for hydrophobic ligands region. N-linked (GlcNAc...) asparagine glycosylation is present at asparagine 402. 5 disulfides stabilise this stretch: cysteine 416–cysteine 462, cysteine 461–cysteine 470, cysteine 483–cysteine 499, cysteine 498–cysteine 509, and cysteine 580–cysteine 589. Asparagine 488 carries an N-linked (GlcNAc...) asparagine glycan. Positions 583–608 (VQEPESCFSPESSKTGDESQATEKQR) are disordered. Positions 596-608 (KTGDESQATEKQR) are enriched in basic and acidic residues.

This sequence belongs to the ALB/AFP/VDB family. Forms a 1:1 complex with Wnt family members; interacts with WNT1, WNT2B, WNT3, WNT5A, WNT7A, WNT7B, WNT8, WNT9A, WNT9B, WNT10A and WNT10B. Interacts with WNT3A. N-glycosylated; more than 90% of the glycans are sialylated. As to expression, detected in brain, especially on brain capillaries (at protein level). Expressed in isolated brain capillaries.

The protein resides in the secreted. In terms of biological role, functions as a carrier for hydrophobic molecules in body fluids. Essential for the solubility and activity of lipidated Wnt family members, including WNT1, WNT2B, WNT3, WNT3A, WNT5A, WNT7A, WNT7B, WNT8, WNT9A, WNT9B, WNT10A and WNT10B. Binds vitamin E. May transport vitamin E in body fluids under conditions where the lipoprotein system is not sufficient. May be involved in the transport of vitamin E across the blood-brain barrier. This Mus musculus (Mouse) protein is Afamin (Afm).